The primary structure comprises 337 residues: tRNA N6-adenosine threonylcarbamoyltransferase (337 aa).

Positions 111 and 115 each coordinate Fe cation. Substrate is bound by residues 134 to 138, Asp167, Gly180, and Asn272; that span reads LVSGG. Asp300 provides a ligand contact to Fe cation.

Belongs to the KAE1 / TsaD family. Requires Fe(2+) as cofactor.

The protein localises to the cytoplasm. It carries out the reaction L-threonylcarbamoyladenylate + adenosine(37) in tRNA = N(6)-L-threonylcarbamoyladenosine(37) in tRNA + AMP + H(+). Functionally, required for the formation of a threonylcarbamoyl group on adenosine at position 37 (t(6)A37) in tRNAs that read codons beginning with adenine. Is involved in the transfer of the threonylcarbamoyl moiety of threonylcarbamoyl-AMP (TC-AMP) to the N6 group of A37, together with TsaE and TsaB. TsaD likely plays a direct catalytic role in this reaction. This is tRNA N6-adenosine threonylcarbamoyltransferase from Photorhabdus laumondii subsp. laumondii (strain DSM 15139 / CIP 105565 / TT01) (Photorhabdus luminescens subsp. laumondii).